Reading from the N-terminus, the 335-residue chain is UDP-3-O-acylglucosamine N-acyltransferase (335 aa).

Catalysis depends on H225, which acts as the Proton acceptor.

This sequence belongs to the transferase hexapeptide repeat family. LpxD subfamily. Homotrimer.

It catalyses the reaction a UDP-3-O-[(3R)-3-hydroxyacyl]-alpha-D-glucosamine + a (3R)-hydroxyacyl-[ACP] = a UDP-2-N,3-O-bis[(3R)-3-hydroxyacyl]-alpha-D-glucosamine + holo-[ACP] + H(+). It participates in bacterial outer membrane biogenesis; LPS lipid A biosynthesis. Functionally, catalyzes the N-acylation of UDP-3-O-acylglucosamine using 3-hydroxyacyl-ACP as the acyl donor. Is involved in the biosynthesis of lipid A, a phosphorylated glycolipid that anchors the lipopolysaccharide to the outer membrane of the cell. The protein is UDP-3-O-acylglucosamine N-acyltransferase of Delftia acidovorans (strain DSM 14801 / SPH-1).